The primary structure comprises 236 residues: Small ribosomal subunit protein uS2c (236 aa).

Belongs to the universal ribosomal protein uS2 family.

The protein resides in the plastid. Its subcellular location is the chloroplast. The chain is Small ribosomal subunit protein uS2c (rps2) from Chaetosphaeridium globosum (Charophycean green alga).